Reading from the N-terminus, the 338-residue chain is MIKQLYKNITICSLAISTALTVFPATSYAKINSEIKAVSEKNLDGDTKMYTRTATTSDSQKNITQSLQFNFLTEPNYDKETVFIKAKGTIGSGLRILDPNGYWNSTLRWPGSYSVSIQNVDDNNNTNVTDFAPKNQDESREVKYTYGYKTGGDFSINRGGLTGNITKESNYSETISYQQPSYRTLLDQSTSHKGVGWKVEAHLINNMGHDHTRQLTNDSDNRTKSEIFSLTRNGNLWAKDNFTPKDKMPVTVSEGFNPEFLAVMSHDKKDKGKSQFVVHYKRSMDEFKIDWNRHGFWGYWSGENHVDKKEEKLSALYEVDWKTHDVKFVKVLNDNEKK.

The N-terminal stretch at 1 to 29 is a signal peptide; it reads MIKQLYKNITICSLAISTALTVFPATSYA.

Belongs to the aerolysin family.

This is an uncharacterized protein from Staphylococcus aureus (strain Mu50 / ATCC 700699).